Consider the following 184-residue polypeptide: GTP-dependent dephospho-CoA kinase (184 aa).

GTP is bound by residues Asp-33, Val-34, Asp-52, Lys-54, and Glu-103.

Belongs to the GTP-dependent DPCK family.

The enzyme catalyses 3'-dephospho-CoA + GTP = GDP + CoA + H(+). The protein operates within cofactor biosynthesis; coenzyme A biosynthesis. In terms of biological role, catalyzes the GTP-dependent phosphorylation of the 3'-hydroxyl group of dephosphocoenzyme A to form coenzyme A (CoA). The polypeptide is GTP-dependent dephospho-CoA kinase (Ignicoccus hospitalis (strain KIN4/I / DSM 18386 / JCM 14125)).